Consider the following 548-residue polypeptide: MFS-rype transporter paaT (548 aa).

The span at 1–10 (MEAPRSDQAH) shows a compositional bias: basic and acidic residues. The tract at residues 1 to 32 (MEAPRSDQAHTDATTPMEAIRTTSLGTNNYGP) is disordered. Polar residues predominate over residues 21-30 (RTTSLGTNNY). 2 N-linked (GlcNAc...) asparagine glycosylation sites follow: Asn70 and Asn93. The next 12 membrane-spanning stretches (helical) occupy residues 100–120 (WYCTMVVAFTCFVVAFCSSVI), 139–159 (LVVITVFVIGFGLGPMVFAPM), 174–194 (ALAVIFVIPCAVSKNIGTLIV), 197–217 (LIDGIAFSAPMTLVGGTLADL), 224–244 (GVPMAAFSAAPFIGPAIGPLV), 256–276 (WLYWIQLILAFVAWVMITFTV), 332–352 (IVLFISLYMSVIYGLLYMFFV), 370–390 (GLMFIPLAIGVIFSACCAPFV), 411–431 (LIPMMWACWCIPSGLFVFAWT), 436–456 (LHWMGPAMGGFLIGVGVILLY), 471–493 (AASALAAKTFIRSIWGACTVLFT), and 505–525 (ASTLLAFIGLACCAIPYVFYF). Residues 258 to 269 (YWIQLILAFVAW) carry the Peroxisomal targeting signal motif.

The protein belongs to the major facilitator superfamily. DHA1 family. Polyamines/proton antiporter (TC 2.A.1.2.16) subfamily.

The protein localises to the peroxisome membrane. Its function is as follows. MFS-type transporter involved in penicillin production, most likely through the translocation of side-chain precursors (phenylacetic acid and phenoxyacetic acid) from the cytosol to the peroxisomal lumen across the peroxisomal membrane. The chain is MFS-rype transporter paaT from Penicillium rubens (strain ATCC 28089 / DSM 1075 / NRRL 1951 / Wisconsin 54-1255) (Penicillium chrysogenum).